An 815-amino-acid chain; its full sequence is Leucine--tRNA ligase (815 aa).

The 'HIGH' region signature appears at 42-52; it reads PYPSGRLHMGH. A 'KMSKS' region motif is present at residues 574 to 578; sequence KMSKS. Lys-577 contributes to the ATP binding site.

This sequence belongs to the class-I aminoacyl-tRNA synthetase family.

The protein localises to the cytoplasm. It catalyses the reaction tRNA(Leu) + L-leucine + ATP = L-leucyl-tRNA(Leu) + AMP + diphosphate. This is Leucine--tRNA ligase from Alcanivorax borkumensis (strain ATCC 700651 / DSM 11573 / NCIMB 13689 / SK2).